The primary structure comprises 85 residues: UPF0335 protein Atu3758 (85 aa).

Belongs to the UPF0335 family.

This chain is UPF0335 protein Atu3758, found in Agrobacterium fabrum (strain C58 / ATCC 33970) (Agrobacterium tumefaciens (strain C58)).